A 279-amino-acid polypeptide reads, in one-letter code: MASQAMSWRGEGERVVRDLAAASTSSFVEHLSQSRPDLLPFGQALPAGVLPQTPHATTIVAMTFAGGVLMAGDRRATMGTMIASRHIEKVFPADGYSVLGIAGTAGLAIDITKLFQVELEHYEKIEGTPLSLEGKANRLGAMVRGNLPMALQGLAVVPLFAGFDPALSQGRLFSYDVTGGRYEELEHHSVGSGSVFARGAMKKLWKPGLSESDAVQVAVESLFDAADDDSATGGPDVIRKLWPIIYTVTRGGSRKIPQHELGTVVEQVLVRRAELGRES.

Residues 1-56 (MASQAMSWRGEGERVVRDLAAASTSSFVEHLSQSRPDLLPFGQALPAGVLPQTPHA) constitute a propeptide, removed in mature form; by autocatalysis. The Nucleophile role is filled by Thr57.

This sequence belongs to the peptidase T1B family. In terms of assembly, the 20S proteasome core is composed of 14 alpha and 14 beta subunits that assemble into four stacked heptameric rings, resulting in a barrel-shaped structure. The two inner rings, each composed of seven catalytic beta subunits, are sandwiched by two outer rings, each composed of seven alpha subunits. The catalytic chamber with the active sites is on the inside of the barrel. Has a gated structure, the ends of the cylinder being occluded by the N-termini of the alpha-subunits. Is capped by the proteasome-associated ATPase, ARC.

The protein localises to the cytoplasm. It carries out the reaction Cleavage of peptide bonds with very broad specificity.. It functions in the pathway protein degradation; proteasomal Pup-dependent pathway. The formation of the proteasomal ATPase ARC-20S proteasome complex, likely via the docking of the C-termini of ARC into the intersubunit pockets in the alpha-rings, may trigger opening of the gate for substrate entry. Interconversion between the open-gate and close-gate conformations leads to a dynamic regulation of the 20S proteasome proteolysis activity. In terms of biological role, component of the proteasome core, a large protease complex with broad specificity involved in protein degradation. The chain is Proteasome subunit beta from Renibacterium salmoninarum (strain ATCC 33209 / DSM 20767 / JCM 11484 / NBRC 15589 / NCIMB 2235).